A 769-amino-acid chain; its full sequence is Calcium up-regulated protein F (769 aa).

Residues 1–21 (MINIKDISKSSNQSEEKSLKG) are disordered. Ricin B-type lectin domains are found at residues 25–145 (KTKY…WTTF) and 116–249 (QGNG…WGIN).

Belongs to the cup family.

The protein localises to the cytoplasm. Its subcellular location is the membrane. Functionally, may play an important role in stabilizing and/or regulating the cell membrane during Ca(2+) stress or certain stages of development. This chain is Calcium up-regulated protein F (cupF), found in Dictyostelium discoideum (Social amoeba).